A 556-amino-acid polypeptide reads, in one-letter code: Formate--tetrahydrofolate ligase (556 aa).

ATP is bound at residue 65–72; the sequence is TPAGEGKS.

This sequence belongs to the formate--tetrahydrofolate ligase family.

It carries out the reaction (6S)-5,6,7,8-tetrahydrofolate + formate + ATP = (6R)-10-formyltetrahydrofolate + ADP + phosphate. The protein operates within one-carbon metabolism; tetrahydrofolate interconversion. This Clostridium beijerinckii (strain ATCC 51743 / NCIMB 8052) (Clostridium acetobutylicum) protein is Formate--tetrahydrofolate ligase.